We begin with the raw amino-acid sequence, 341 residues long: tRNA N6-adenosine threonylcarbamoyltransferase (341 aa).

2 residues coordinate Fe cation: H111 and H115. Substrate-binding positions include 134 to 138 (LVSGG), D167, G180, and N274. D302 serves as a coordination point for Fe cation.

This sequence belongs to the KAE1 / TsaD family. Fe(2+) serves as cofactor.

It is found in the cytoplasm. The catalysed reaction is L-threonylcarbamoyladenylate + adenosine(37) in tRNA = N(6)-L-threonylcarbamoyladenosine(37) in tRNA + AMP + H(+). Required for the formation of a threonylcarbamoyl group on adenosine at position 37 (t(6)A37) in tRNAs that read codons beginning with adenine. Is involved in the transfer of the threonylcarbamoyl moiety of threonylcarbamoyl-AMP (TC-AMP) to the N6 group of A37, together with TsaE and TsaB. TsaD likely plays a direct catalytic role in this reaction. This chain is tRNA N6-adenosine threonylcarbamoyltransferase, found in Paraburkholderia phymatum (strain DSM 17167 / CIP 108236 / LMG 21445 / STM815) (Burkholderia phymatum).